The primary structure comprises 317 residues: Acetyl-coenzyme A carboxylase carboxyl transferase subunit alpha (317 aa).

The region spanning 38–292 is the CoA carboxyltransferase C-terminal domain; sequence TLEERLARLE…DNIIKQSLVE (255 aa).

This sequence belongs to the AccA family. As to quaternary structure, acetyl-CoA carboxylase is a heterohexamer composed of biotin carboxyl carrier protein (AccB), biotin carboxylase (AccC) and two subunits each of ACCase subunit alpha (AccA) and ACCase subunit beta (AccD).

The protein resides in the cytoplasm. It carries out the reaction N(6)-carboxybiotinyl-L-lysyl-[protein] + acetyl-CoA = N(6)-biotinyl-L-lysyl-[protein] + malonyl-CoA. Its pathway is lipid metabolism; malonyl-CoA biosynthesis; malonyl-CoA from acetyl-CoA: step 1/1. Component of the acetyl coenzyme A carboxylase (ACC) complex. First, biotin carboxylase catalyzes the carboxylation of biotin on its carrier protein (BCCP) and then the CO(2) group is transferred by the carboxyltransferase to acetyl-CoA to form malonyl-CoA. The protein is Acetyl-coenzyme A carboxylase carboxyl transferase subunit alpha of Oceanobacillus iheyensis (strain DSM 14371 / CIP 107618 / JCM 11309 / KCTC 3954 / HTE831).